Reading from the N-terminus, the 512-residue chain is N-acetyltryptophan 6-hydroxylase ivoC (512 aa).

A helical membrane pass occupies residues 6–26 (LVFSFPAWALLLVLTLLYTLY). Asparagine 118 carries an N-linked (GlcNAc...) asparagine glycan. A heme-binding site is contributed by cysteine 453.

It belongs to the cytochrome P450 family. Heme serves as cofactor.

The protein resides in the membrane. The protein operates within pigment biosynthesis. Its function is as follows. N-acetyltryptophan 6-hydroxylase; part of the pathway that mediates the biosynthesis of the gray-brown conidiophore pigment. The first step of the pathway is performed by the nonribosomal peptide synthetase ivoA that catalyzes ATP-dependent unidirectional stereoinversion of L-tryptophan to D-tryptophan with complete conversion. While the stereoinversion is catalyzed by the epimerization (E) domain of ivoA, the terminal condensation (C) domain stereoselectively hydrolyzes D-tryptophanyl-S-phosphopantetheine thioester and thus represents a non-canonical C domain function. D-tryptophan is acetylated, probably by an endogenous acetyltransferase. N-acetyltryptophan is further 6-hydroxylated into N-acetyl-6-hydroxytryptophan (AHT) by the cytochrome P450 monooxygenase ivoC. N-acetyl-6-hydroxytryptophan is substrate of the N-acetyl-6-hydroxytryptophan oxidase ivoB to produce the gray-brown conidiophore pigment. The polypeptide is N-acetyltryptophan 6-hydroxylase ivoC (Emericella nidulans (strain FGSC A4 / ATCC 38163 / CBS 112.46 / NRRL 194 / M139) (Aspergillus nidulans)).